A 334-amino-acid polypeptide reads, in one-letter code: Petrobactin import system permease protein FatD (334 aa).

9 helical membrane-spanning segments follow: residues 24-44 (FIIA…TGVY), 64-84 (TVAL…MQLI), 98-118 (IEWS…PTLV), 119-139 (QRMT…FLFL), 152-172 (IIGL…GLLF), 197-217 (LWLI…LTLA), 234-254 (IVLF…AVIG), 277-297 (SNLP…DIIS), and 304-324 (FELP…ITIL).

This sequence belongs to the binding-protein-dependent transport system permease family. FecCD subfamily. In terms of assembly, the complex is composed of two ATP-binding proteins (FatE), two transmembrane proteins (FatC and FatD) and a solute-binding protein (FpuA).

The protein localises to the cell membrane. Functionally, part of an ABC transporter complex involved in ferric-petrobactin uptake. Probably responsible for the translocation of the substrate across the membrane. The sequence is that of Petrobactin import system permease protein FatD from Bacillus anthracis.